Here is a 637-residue protein sequence, read N- to C-terminus: MGKIIGIDLGTTNSCVAVLDGDKPRVIENAEGERTTASVIAYTDGETLVGQPAKRQAVTNPTNTLFAIKRLIGRRFEDEEVQRDIEIMPYKIVKADNGDAWVEAKGQKMAAPQVSAEVLKKMKKTAEDFLGEEVTGAVITVPAYFNDAQRQATKDAGRIAGLEVKRIINEPTAAALAYGLDKKGGDRTIAVYDLGGGTFDISIIEIDEVEGEKTFEVLATNGDTHLGGEDFDNRLINYLVDEFKKEQGIDLKNDPLAMQRVKEAAEKAKIELSSTSQTDVNLPYVTADATGPKHMNIKVTRAKLESLVEDLVQRSLEPLKVALADADLSVNDITDVILVGGQTRMPMVQAKVAEFFGKEARRDVNPDEAVAMGAAVQGGVLAGEVKDVLLLDVTPLSLGIETMGGVMTKLVEKNTTIPTKANQVFSTAEDNQSAVTIHVLQGERKQAMYNKSLGQFNLEGIQPAPRGMPQIEVTFDLDADGILHVSAKDKQTGKEQKITIQASGGLSDDEIEKMVQEAEANKEADKKFEELATARNQADQMIHGTRKQMEEAGDALPAEEKEKIETAISELEEARKGEDKEAIDAKVQALMTAAQKLMEIAQQQAQAQQAQGADAGAQSKDDDVVDAEFEEVKDDKK.

T198 carries the post-translational modification Phosphothreonine; by autocatalysis. The disordered stretch occupies residues 600 to 637 (IAQQQAQAQQAQGADAGAQSKDDDVVDAEFEEVKDDKK). The segment covering 601–618 (AQQQAQAQQAQGADAGAQ) has biased composition (low complexity). The segment covering 623–637 (DVVDAEFEEVKDDKK) has biased composition (acidic residues).

The protein belongs to the heat shock protein 70 family.

Its function is as follows. Acts as a chaperone. This chain is Chaperone protein DnaK, found in Vibrio parahaemolyticus serotype O3:K6 (strain RIMD 2210633).